We begin with the raw amino-acid sequence, 209 residues long: MINYLRGQAIEVIKTPNNRLILILDVNQIGYEIQIPSRLALDIGNNNNDSCQIFTHLLLREEQPLLYGFGTAPERELFRQLLSVNGVGAQLALALIDTLGIEELVVAIVTGNTKILSKTPGVGLKTAERIALELKTKLAAWRQLREATTTITAILPAAAILEDVQMTLLALGYSQEEIDRAMAVLSQDALFSKNTQPEDWIKGAINWLG.

The domain I stretch occupies residues 1 to 70; that stretch reads MINYLRGQAI…EEQPLLYGFG (70 aa). Residues 71 to 149 form a domain II region; the sequence is TAPERELFRQ…AWRQLREATT (79 aa). The tract at residues 150-158 is flexible linker; the sequence is TITAILPAA. The interval 158–209 is domain III; sequence AAILEDVQMTLLALGYSQEEIDRAMAVLSQDALFSKNTQPEDWIKGAINWLG.

This sequence belongs to the RuvA family. As to quaternary structure, homotetramer. Forms an RuvA(8)-RuvB(12)-Holliday junction (HJ) complex. HJ DNA is sandwiched between 2 RuvA tetramers; dsDNA enters through RuvA and exits via RuvB. An RuvB hexamer assembles on each DNA strand where it exits the tetramer. Each RuvB hexamer is contacted by two RuvA subunits (via domain III) on 2 adjacent RuvB subunits; this complex drives branch migration. In the full resolvosome a probable DNA-RuvA(4)-RuvB(12)-RuvC(2) complex forms which resolves the HJ.

The protein localises to the cytoplasm. In terms of biological role, the RuvA-RuvB-RuvC complex processes Holliday junction (HJ) DNA during genetic recombination and DNA repair, while the RuvA-RuvB complex plays an important role in the rescue of blocked DNA replication forks via replication fork reversal (RFR). RuvA specifically binds to HJ cruciform DNA, conferring on it an open structure. The RuvB hexamer acts as an ATP-dependent pump, pulling dsDNA into and through the RuvAB complex. HJ branch migration allows RuvC to scan DNA until it finds its consensus sequence, where it cleaves and resolves the cruciform DNA. The polypeptide is Holliday junction branch migration complex subunit RuvA (Microcystis aeruginosa (strain NIES-843 / IAM M-2473)).